Consider the following 130-residue polypeptide: Small ribosomal subunit protein bS18 (130 aa).

2 stretches are compositionally biased toward basic and acidic residues: residues 98 to 108 and 117 to 130; these read KKMEESVKSAE and EESK…AKTE. The interval 98–130 is disordered; it reads KKMEESVKSAEPKATAEATEESKPKRTRKAKTE.

Belongs to the bacterial ribosomal protein bS18 family. In terms of assembly, part of the 30S ribosomal subunit. Forms a tight heterodimer with protein bS6.

Its function is as follows. Binds as a heterodimer with protein bS6 to the central domain of the 16S rRNA, where it helps stabilize the platform of the 30S subunit. This Metamycoplasma arthritidis (strain 158L3-1) (Mycoplasma arthritidis) protein is Small ribosomal subunit protein bS18.